We begin with the raw amino-acid sequence, 280 residues long: PsbP domain-containing protein 7, chloroplastic (280 aa).

The N-terminal 36 residues, 1–36 (MSLKPYFSLLYSSPTNVKLSNFLIAQQPSGDLKTTP), are a transit peptide targeting the chloroplast.

The protein belongs to the PsbP family.

It localises to the plastid. Its subcellular location is the chloroplast. This is PsbP domain-containing protein 7, chloroplastic (PPD7) from Arabidopsis thaliana (Mouse-ear cress).